Reading from the N-terminus, the 452-residue chain is MTHIKFDSSALKQFVHENELGEMQAMVNAANDELRNGTGAGADFRDWLHLPTEYDKEEFARIKKAADKIQRDSDVLVVIGIGGSYLGAQMAIDFLHNTFYQAQNAKDRKAPLVVFAGNSLSSTYVHDLIQLIGDKDFSINVVSKSGTTTEPSIAFRIFKGLLIKKYGENEANKRIYATTDKTKGALKTEADAHGYETFVIPDGVGGRYSVLSAVGLLPIAASGADIDKLMEGAAQAEKDYVDPDLTKNEAYQYAAYRNILYRKGYETELLENYEPNMRMFAEWWKQLAGESEGKDQKGIYPSSANFTTDLHSLGQYIQEGRRFLMETVVKLDKPNYDMEIPTEPDNLDGLGYLEGKTMDYVNTKAYEAVVAAHTDGGVPVMTVHIPQEDEYTLGYLIYFFEVAMGISGYLNGINPFNQPGVEAYKTNMFGLLGKPGYEEIGKELRAKMDKND.

The Proton donor role is filled by Glu290. Catalysis depends on residues His311 and Lys425.

Belongs to the GPI family.

It is found in the cytoplasm. The catalysed reaction is alpha-D-glucose 6-phosphate = beta-D-fructose 6-phosphate. Its pathway is carbohydrate biosynthesis; gluconeogenesis. The protein operates within carbohydrate degradation; glycolysis; D-glyceraldehyde 3-phosphate and glycerone phosphate from D-glucose: step 2/4. Catalyzes the reversible isomerization of glucose-6-phosphate to fructose-6-phosphate. This chain is Glucose-6-phosphate isomerase, found in Limosilactobacillus reuteri (strain DSM 20016) (Lactobacillus reuteri).